The chain runs to 470 residues: ATP synthase subunit beta (470 aa).

An ATP-binding site is contributed by 158–165; the sequence is GGAGVGKT.

The protein belongs to the ATPase alpha/beta chains family. In terms of assembly, F-type ATPases have 2 components, CF(1) - the catalytic core - and CF(0) - the membrane proton channel. CF(1) has five subunits: alpha(3), beta(3), gamma(1), delta(1), epsilon(1). CF(0) has three main subunits: a(1), b(2) and c(9-12). The alpha and beta chains form an alternating ring which encloses part of the gamma chain. CF(1) is attached to CF(0) by a central stalk formed by the gamma and epsilon chains, while a peripheral stalk is formed by the delta and b chains.

Its subcellular location is the cell membrane. It catalyses the reaction ATP + H2O + 4 H(+)(in) = ADP + phosphate + 5 H(+)(out). Functionally, produces ATP from ADP in the presence of a proton gradient across the membrane. The catalytic sites are hosted primarily by the beta subunits. This Alkalihalophilus pseudofirmus (strain ATCC BAA-2126 / JCM 17055 / OF4) (Bacillus pseudofirmus) protein is ATP synthase subunit beta.